Here is a 320-residue protein sequence, read N- to C-terminus: MAVVTIRQLLDCGVHFGHPKTRWNPKMKRFIFTERSGIYIIDLQQSLALIDKAYDFVKETVAHGGTILFVGTKKQAQESIAEQAQRVGQPYVNQRWLGGLLTNFQTVHKRLNRLKELDLVDFDDTTRGFTKKELLIQRRERDKLEKSLGGIRNLTKTPSAMWVVDTKKEHLAIDEARKLGIPVIGILDTNCDPDEVQYPIPGNDDAIRSVALLTRIIADAAAEGLIQRHQKPDAEGSAPAEPLADWERELLEQGDAAKAALPVEENDVDAEVSAKNEAKSDDEVPAPVHAPESDDATEAKIEAEATEAEAAPATTGPVSE.

The disordered stretch occupies residues 254-320 (GDAAKAALPV…APATTGPVSE (67 aa)). The span at 272 to 282 (VSAKNEAKSDD) shows a compositional bias: basic and acidic residues. A compositionally biased stretch (low complexity) spans 308–320 (AEAAPATTGPVSE).

The protein belongs to the universal ribosomal protein uS2 family.

The chain is Small ribosomal subunit protein uS2 from Clavibacter sepedonicus (Clavibacter michiganensis subsp. sepedonicus).